Consider the following 204-residue polypeptide: Large ribosomal subunit protein bL25 (204 aa).

Belongs to the bacterial ribosomal protein bL25 family. CTC subfamily. Part of the 50S ribosomal subunit; part of the 5S rRNA/L5/L18/L25 subcomplex. Contacts the 5S rRNA. Binds to the 5S rRNA independently of L5 and L18.

Functionally, this is one of the proteins that binds to the 5S RNA in the ribosome where it forms part of the central protuberance. This Rhizobium etli (strain ATCC 51251 / DSM 11541 / JCM 21823 / NBRC 15573 / CFN 42) protein is Large ribosomal subunit protein bL25.